Reading from the N-terminus, the 598-residue chain is Acetylcholine receptor subunit alpha-type acr-5 (598 aa).

The N-terminal stretch at 1–16 (MLPNIILILLIRYCSC) is a signal peptide. The Extracellular portion of the chain corresponds to 17–323 (GAGSRVYEKY…HLVIRRKPLY (307 aa)). 6 N-linked (GlcNAc...) asparagine glycosylation sites follow: Asn54, Asn71, Asn77, Asn134, Asn178, and Asn252. A helical membrane pass occupies residues 324-344 (YMINLVVPTSIITIVAVTGFF). Residues 345–356 (TPTSSSSERDEK) lie on the Cytoplasmic side of the membrane. The chain crosses the membrane as a helical span at residues 357 to 377 (LYLGINTLLTMSVMMLMVCNQ). At 378–391 (MPSTSTYVPLMSWY) the chain is on the extracellular side. A helical transmembrane segment spans residues 392 to 412 (YIGIIMVIVVGTFLATGVLAI). Over 413–563 (HGQKHYNKPI…WEFLANVLDR (151 aa)) the chain is Cytoplasmic. The helical transmembrane segment at 564–584 (ILLTIFCGFTFAVFIILIGFD) threads the bilayer. Residues 585–598 (SFFTFHTDSPPKTM) are Extracellular-facing.

This sequence belongs to the ligand-gated ion channel (TC 1.A.9) family. Acetylcholine receptor (TC 1.A.9.1) subfamily.

The protein localises to the postsynaptic cell membrane. It is found in the cell membrane. Subunit of nicotinic acetylcholine receptor (nAChR). Involved in nAChR sensitivity to nicotine. Modulates locomotion towards the drug nicotine. This chain is Acetylcholine receptor subunit alpha-type acr-5, found in Caenorhabditis elegans.